The following is a 346-amino-acid chain: Biotin synthase (346 aa).

The Radical SAM core domain occupies 38–256 (RQVQVSTLLS…IAVARIMMPT (219 aa)). Positions 53, 57, and 60 each coordinate [4Fe-4S] cluster. [2Fe-2S] cluster contacts are provided by Cys-97, Cys-128, Cys-188, and Arg-260.

This sequence belongs to the radical SAM superfamily. Biotin synthase family. In terms of assembly, homodimer. [4Fe-4S] cluster serves as cofactor. The cofactor is [2Fe-2S] cluster.

It carries out the reaction (4R,5S)-dethiobiotin + (sulfur carrier)-SH + 2 reduced [2Fe-2S]-[ferredoxin] + 2 S-adenosyl-L-methionine = (sulfur carrier)-H + biotin + 2 5'-deoxyadenosine + 2 L-methionine + 2 oxidized [2Fe-2S]-[ferredoxin]. It functions in the pathway cofactor biosynthesis; biotin biosynthesis; biotin from 7,8-diaminononanoate: step 2/2. Its function is as follows. Catalyzes the conversion of dethiobiotin (DTB) to biotin by the insertion of a sulfur atom into dethiobiotin via a radical-based mechanism. In Cronobacter sakazakii (strain ATCC BAA-894) (Enterobacter sakazakii), this protein is Biotin synthase.